Consider the following 425-residue polypeptide: Formyl-CoA:oxalate CoA-transferase (425 aa).

CoA contacts are provided by residues Gln17 to Ser18, Arg38, Leu72 to Lys75, Asn96 to Gly98, Arg104, and Lys136 to Glu139. Asp168 functions as the Nucleophile in the catalytic mechanism. Gly247–Gln249 lines the substrate pocket.

It belongs to the CoA-transferase III family. Frc subfamily. Homodimer.

The enzyme catalyses formyl-CoA + oxalate = oxalyl-CoA + formate. The protein operates within metabolic intermediate degradation; oxalate degradation; CO(2) and formate from oxalate: step 1/2. Its function is as follows. Involved in the catabolism of oxalate and in the adapatation to low pH via the induction of the oxalate-dependent acid tolerance response (ATR). Catalyzes the transfer of the CoA moiety from formyl-CoA to oxalate. The sequence is that of Formyl-CoA:oxalate CoA-transferase from Bradyrhizobium sp. (strain ORS 278).